A 476-amino-acid polypeptide reads, in one-letter code: Protein transport protein Sec61 subunit alpha isoform 2 (476 aa).

Residues Met-1–Leu-33 lie on the Cytoplasmic side of the membrane. Residues Trp-34–Ile-53 traverse the membrane as a helical segment. Over Met-54–Leu-76 the chain is Lumenal. Residues Met-77–Gly-96 form a helical membrane-spanning segment. At Ala-97–Lys-117 the chain is on the cytoplasmic side. The helical transmembrane segment at Leu-118–Gly-138 threads the bilayer. Topologically, residues Asp-139–Gly-144 are lumenal. The helical transmembrane segment at Ala-145 to Leu-165 threads the bilayer. At Asp-166–Gly-172 the chain is on the cytoplasmic side. A helical transmembrane segment spans residues Tyr-173–Trp-193. Residues Lys-194 to Pro-240 lie on the Lumenal side of the membrane. Residues Asn-241 to Phe-261 form a helical membrane-spanning segment. Topologically, residues Arg-262–Asn-288 are cytoplasmic. Residues Ile-289–Ser-309 form a helical membrane-spanning segment. Residues Val-310–Ile-354 lie on the Lumenal side of the membrane. A helical membrane pass occupies residues Phe-355–Phe-375. At Ser-376–Ala-420 the chain is on the cytoplasmic side. A helical transmembrane segment spans residues Ala-421–Ile-441. Topologically, residues Gly-442–Thr-445 are lumenal. A helical transmembrane segment spans residues Gly-446–Val-462. The Cytoplasmic segment spans residues Lys-463–Phe-476.

Belongs to the SecY/SEC61-alpha family. The SEC61 channel-forming translocon complex consists of channel-forming core components SEC61A1, SEC61B and SEC61G and different auxiliary components such as SEC62 and SEC63.

It localises to the endoplasmic reticulum membrane. Functionally, component of SEC61 channel-forming translocon complex that mediates transport of signal peptide-containing precursor polypeptides across the endoplasmic reticulum (ER). Forms a ribosome receptor and a gated pore in the ER membrane, both functions required for cotranslational translocation of nascent polypeptides. In Homo sapiens (Human), this protein is Protein transport protein Sec61 subunit alpha isoform 2 (SEC61A2).